The chain runs to 263 residues: uncharacterized protein (263 aa).

31-38 (GPTGSGKT) is a binding site for ATP.

Belongs to the CbbQ/NirQ/NorQ/GpvN family.

This is an uncharacterized protein from Staphylococcus aureus (strain NCTC 8325 / PS 47).